The following is a 94-amino-acid chain: Small ribosomal subunit protein uS19 (94 aa).

This sequence belongs to the universal ribosomal protein uS19 family.

Functionally, protein S19 forms a complex with S13 that binds strongly to the 16S ribosomal RNA. This Pelotomaculum thermopropionicum (strain DSM 13744 / JCM 10971 / SI) protein is Small ribosomal subunit protein uS19.